We begin with the raw amino-acid sequence, 421 residues long: Glutamyl-tRNA reductase (421 aa).

Residues 49–52 (TCNR), serine 109, 114–116 (EPQ), and glutamine 120 contribute to the substrate site. The active-site Nucleophile is cysteine 50. 189–194 (GLGQIG) contributes to the NADP(+) binding site.

This sequence belongs to the glutamyl-tRNA reductase family. As to quaternary structure, homodimer.

It carries out the reaction (S)-4-amino-5-oxopentanoate + tRNA(Glu) + NADP(+) = L-glutamyl-tRNA(Glu) + NADPH + H(+). It participates in porphyrin-containing compound metabolism; protoporphyrin-IX biosynthesis; 5-aminolevulinate from L-glutamyl-tRNA(Glu): step 1/2. In terms of biological role, catalyzes the NADPH-dependent reduction of glutamyl-tRNA(Glu) to glutamate 1-semialdehyde (GSA). This is Glutamyl-tRNA reductase from Limosilactobacillus reuteri (strain DSM 20016) (Lactobacillus reuteri).